Here is a 517-residue protein sequence, read N- to C-terminus: Cytochrome P450 monooxygenase polD (517 aa).

A helical membrane pass occupies residues 5–27 (VVLVGIVVLVLAYLSSTGKVYPH). Cys435 is a heme binding site.

This sequence belongs to the cytochrome P450 family. The cofactor is heme.

It is found in the membrane. Cytochrome P450 monooxygenase; part of the gene cluster that mediates the biosynthesis of antifungal fernane-type triterpenoid polytolypin. PolD doe not seem to be involved in the biosynthesis of polytolypin. Within the pathway, the triterpene cyclase polA first catalyzes the cyclization of 2,3-oxidosqualene to motiol, polc converts the 4-alpha-methyl group of motiol to a carboxyl group, polB is responsible for appending a hydroxyl group at the 2-alpha position and polE is a dual functional P450, which can catalyze the formation of both the 1-beta-hydroxyl group and 10-beta-carboxyl group. In Polytolypa hystricis (strain UAMH7299), this protein is Cytochrome P450 monooxygenase polD.